Reading from the N-terminus, the 468-residue chain is Ribulose bisphosphate carboxylase large chain (468 aa).

Lysine 5 is subject to N6,N6,N6-trimethyllysine. Positions 114 and 164 each coordinate substrate. Lysine 166 acts as the Proton acceptor in catalysis. A substrate-binding site is contributed by lysine 168. Positions 192, 194, and 195 each coordinate Mg(2+). Lysine 192 is modified (N6-carboxylysine). Histidine 285 serves as the catalytic Proton acceptor. Residues arginine 286, histidine 318, and serine 370 each coordinate substrate.

It belongs to the RuBisCO large chain family. Type I subfamily. As to quaternary structure, heterohexadecamer of 8 large chains and 8 small chains; disulfide-linked. The disulfide link is formed within the large subunit homodimers. Mg(2+) is required as a cofactor. In terms of processing, the disulfide bond which can form in the large chain dimeric partners within the hexadecamer appears to be associated with oxidative stress and protein turnover.

The protein localises to the plastid. The protein resides in the chloroplast. The enzyme catalyses 2 (2R)-3-phosphoglycerate + 2 H(+) = D-ribulose 1,5-bisphosphate + CO2 + H2O. It carries out the reaction D-ribulose 1,5-bisphosphate + O2 = 2-phosphoglycolate + (2R)-3-phosphoglycerate + 2 H(+). Functionally, ruBisCO catalyzes two reactions: the carboxylation of D-ribulose 1,5-bisphosphate, the primary event in carbon dioxide fixation, as well as the oxidative fragmentation of the pentose substrate in the photorespiration process. Both reactions occur simultaneously and in competition at the same active site. This chain is Ribulose bisphosphate carboxylase large chain, found in Solandra grandiflora (Chalice vine).